The sequence spans 117 residues: Snaclec CHH-B subunit beta (117 aa).

3 disulfides stabilise this stretch: C2/C13, C30/C115, and C92/C107. In terms of domain architecture, C-type lectin spans 9–116 (YEGHCYRVFQ…CSKTHNVVCK (108 aa)).

It belongs to the snaclec family. Heterodimer of subunits alpha and beta; disulfide-linked. Expressed by the venom gland.

Its subcellular location is the secreted. Functionally, binds to the subunit GPIbalpha (GP1BA) of the platelet GPIb/V/IX receptor system. It inhibits ristocetin- and vWF-induced platelet aggregation in platelet-rich plasma by inhibiting the binding of vWF to GPIbalpha. The sequence is that of Snaclec CHH-B subunit beta from Crotalus horridus (Timber rattlesnake).